The sequence spans 194 residues: Peptidyl-tRNA hydrolase (194 aa).

Tyr21 is a binding site for tRNA. The active-site Proton acceptor is His26. Positions 72, 74, and 120 each coordinate tRNA.

This sequence belongs to the PTH family. As to quaternary structure, monomer.

The protein localises to the cytoplasm. It catalyses the reaction an N-acyl-L-alpha-aminoacyl-tRNA + H2O = an N-acyl-L-amino acid + a tRNA + H(+). In terms of biological role, hydrolyzes ribosome-free peptidyl-tRNAs (with 1 or more amino acids incorporated), which drop off the ribosome during protein synthesis, or as a result of ribosome stalling. Catalyzes the release of premature peptidyl moieties from peptidyl-tRNA molecules trapped in stalled 50S ribosomal subunits, and thus maintains levels of free tRNAs and 50S ribosomes. This Halorhodospira halophila (strain DSM 244 / SL1) (Ectothiorhodospira halophila (strain DSM 244 / SL1)) protein is Peptidyl-tRNA hydrolase.